The sequence spans 187 residues: Proline-rich protein 29 (187 aa).

Residues His133–Pro187 are disordered.

This chain is Proline-rich protein 29 (Prr29), found in Mus musculus (Mouse).